The chain runs to 556 residues: Olefin beta-lactone synthetase (556 aa).

Residues 187–195, 321–326, D430, and R445 each bind ATP; these read TSGSTGVPK and TPYGAT.

The protein belongs to the ATP-dependent AMP-binding enzyme family. In terms of assembly, monomer. Forms a complex with OleB and OleD.

The protein resides in the cytoplasm. The enzyme catalyses a (2R,3S)-2-alkyl-3-hydroxyalkanoate + ATP = a cis-3-alkyl-4-alkyloxetan-2-one + AMP + diphosphate. Its function is as follows. Involved in olefin biosynthesis. Catalyzes the conversion of 2-alkyl-3-hydroxyalkanoic acids to beta-lactones in the presence of ATP. The protein is Olefin beta-lactone synthetase of Xanthomonas campestris pv. campestris (strain ATCC 33913 / DSM 3586 / NCPPB 528 / LMG 568 / P 25).